A 480-amino-acid polypeptide reads, in one-letter code: NADH-quinone oxidoreductase subunit N (480 aa).

Helical transmembrane passes span 10-30 (FISI…ILIE), 40-60 (WSSL…WGGI), 80-100 (FFTV…TAFF), 117-137 (AVFG…FLGI), 166-186 (LMGS…YGAI), 208-228 (VLFF…AALV), 246-266 (TAFM…RLFF), 276-296 (WNQV…FVAL), 304-324 (FFAY…VIGN), 330-350 (ALTF…AVLA), 374-394 (LASL…TAGF), 409-431 (YYGL…LRII), and 452-472 (IVGT…APFL).

This sequence belongs to the complex I subunit 2 family. NDH-1 is composed of 14 different subunits. Subunits NuoA, H, J, K, L, M, N constitute the membrane sector of the complex.

It localises to the cell inner membrane. The enzyme catalyses a quinone + NADH + 5 H(+)(in) = a quinol + NAD(+) + 4 H(+)(out). Its function is as follows. NDH-1 shuttles electrons from NADH, via FMN and iron-sulfur (Fe-S) centers, to quinones in the respiratory chain. The immediate electron acceptor for the enzyme in this species is believed to be ubiquinone. Couples the redox reaction to proton translocation (for every two electrons transferred, four hydrogen ions are translocated across the cytoplasmic membrane), and thus conserves the redox energy in a proton gradient. The protein is NADH-quinone oxidoreductase subunit N of Protochlamydia amoebophila (strain UWE25).